We begin with the raw amino-acid sequence, 55 residues long: Cicadin (55 aa).

Over residues 1 to 26 (NEYHGFVDKANNENKRKKQQGRDDFV) the composition is skewed to basic and acidic residues. The interval 1 to 39 (NEYHGFVDKANNENKRKKQQGRDDFVVKPNNFANRRRKD) is disordered.

Its function is as follows. Possesses antifungal activity against B.cinerea, M.arachidicola, F.oxysporum, R.solani and C.comatus. Functionally, suppresses the activity of HIV-1 reverse transcriptase and stimulates the proliferation of murine splenocytes. The chain is Cicadin from Cicada flammata.